A 229-amino-acid chain; its full sequence is Ribonuclease T (229 aa).

An Exonuclease domain is found at 23–197 (VIIDVETAGF…YDTERTAKLF (175 aa)). Residues D26, E28, H184, and D189 each contribute to the Mg(2+) site. H184 acts as the Proton donor/acceptor in catalysis.

The protein belongs to the RNase T family. Homodimer. Mg(2+) serves as cofactor.

Its function is as follows. Trims short 3' overhangs of a variety of RNA species, leaving a one or two nucleotide 3' overhang. Responsible for the end-turnover of tRNA: specifically removes the terminal AMP residue from uncharged tRNA (tRNA-C-C-A). Also appears to be involved in tRNA biosynthesis. In Haemophilus influenzae (strain 86-028NP), this protein is Ribonuclease T.